The following is a 641-amino-acid chain: Tetracycline resistance protein TetQ (641 aa).

One can recognise a tr-type G domain in the interval 1-244; the sequence is MNIINLGILA…AITSFILPPA (244 aa). GTP is bound by residues 10–17, 74–78, and 128–131; these read AHIDAGKT, DTPGH, and NKID.

This sequence belongs to the TRAFAC class translation factor GTPase superfamily. Classic translation factor GTPase family. TetM/TetO subfamily.

Its function is as follows. Abolishes the inhibitory effect of tetracyclin on protein synthesis by a non-covalent modification of the ribosomes. This is Tetracycline resistance protein TetQ (tetQ) from Xylanibacter ruminicola (Prevotella ruminicola).